The following is a 956-amino-acid chain: Angiomotin-like protein 1 (956 aa).

Residues 197-246 (QSQFFRGQQQQQQQQGAVGHGYYMAGGTSQKSRTEGRPTVNRANSGQAHK) are disordered. Phosphoserine occurs at positions 241 and 269. Residues 259–279 (RSLSERIMQLSLERNGAKQHL) adopt a coiled-coil conformation. Disordered regions lie at residues 274 to 322 (GAKQ…QMMS), 382 to 405 (PSTM…LHSV), and 411 to 430 (LPMA…SQQL). Over residues 282-294 (SGNGKGFKVGGGP) the composition is skewed to gly residues. Ser-295 carries the phosphoserine modification. A compositionally biased stretch (polar residues) spans 382–398 (PSTMQQHSPMSSQTSSA). Coiled coils occupy residues 438-639 (VERA…WLER) and 665-694 (ALLE…YLEE). The residue at position 720 (Ser-720) is a Phosphoserine. The stretch at 729–762 (SLEAHIWQEEEEVVQANRRCQDMEYTIKNLHAKI) forms a coiled coil. Positions 773–823 (QQRSRKDAGKTDSSSLRPARSVPSIAAATGTHSRQTSLTSSQLAEEKKEEK) are disordered. 3 positions are modified to phosphoserine: Ser-793, Ser-805, and Ser-828. Residues 802–815 (GTHSRQTSLTSSQL) show a composition bias toward polar residues. 2 disordered regions span residues 841–880 (ASAP…TQTD) and 894–944 (PSRG…LHKP). Over residues 852 to 866 (SALSSIASTTAASSA) the composition is skewed to low complexity. Ser-900 carries the post-translational modification Phosphoserine. The residue at position 902 (Thr-902) is a Phosphothreonine. Ser-906 is subject to Phosphoserine. Positions 953-956 (EVLI) match the PDZ-binding motif.

The protein belongs to the angiomotin family. Post-translationally, polyubiquitinated by NEDD4, leading to proteasomal degradation.

Its subcellular location is the cell junction. It localises to the tight junction. Inhibits the Wnt/beta-catenin signaling pathway, probably by recruiting CTNNB1 to recycling endosomes and hence preventing its translocation to the nucleus. The chain is Angiomotin-like protein 1 (AMOTL1) from Homo sapiens (Human).